Consider the following 91-residue polypeptide: Protein SPATA45 homolog (91 aa).

The segment at 42–91 is disordered; sequence RADRKHDPNGFNSSVFKGASNQHQESSLDFATAEPEFHRERRHFPEKSEY. The segment covering 51–70 has biased composition (polar residues); sequence GFNSSVFKGASNQHQESSLD. Residues 76-91 show a composition bias toward basic and acidic residues; it reads PEFHRERRHFPEKSEY.

It belongs to the SPATA45 family.

The sequence is that of Protein SPATA45 homolog from Nematostella vectensis (Starlet sea anemone).